Consider the following 257-residue polypeptide: Synaptosomal-associated protein 29 (257 aa).

Positions 1–42 (MSGYPKSYNPFDDDVEDEDTRPAPWKDARDLPDGPDPPIDRQ) are disordered. The segment covering 20 to 32 (TRPAPWKDARDLP) has biased composition (basic and acidic residues). Phosphoserine is present on residues serine 77, serine 78, serine 114, serine 163, serine 181, serine 203, and serine 209. Residues 195–257 (RAYHQKIDSN…KSTEKKVRQL (63 aa)) form the t-SNARE coiled-coil homology domain.

Belongs to the SNAP-25 family. In terms of assembly, forms a SNARE complex, composed of VAMP8, SNAP29 and STX17, involved in fusion of autophagosome with lysosome. Interacts with multiple syntaxins including STX6. Interacts with EIPR1. Interacts with STX17; this interaction is increased in the absence of TMEM39A. Widely expressed.

It is found in the cytoplasm. The protein resides in the golgi apparatus membrane. It localises to the cytoplasmic vesicle. Its subcellular location is the autophagosome membrane. The protein localises to the cell projection. It is found in the cilium membrane. Functionally, SNAREs, soluble N-ethylmaleimide-sensitive factor-attachment protein receptors, are essential proteins for fusion of cellular membranes. SNAREs localized on opposing membranes assemble to form a trans-SNARE complex, an extended, parallel four alpha-helical bundle that drives membrane fusion. SNAP29 is a SNARE involved in autophagy through the direct control of autophagosome membrane fusion with the lysososome membrane. Also plays a role in ciliogenesis by regulating membrane fusions. This chain is Synaptosomal-associated protein 29, found in Rattus norvegicus (Rat).